A 418-amino-acid polypeptide reads, in one-letter code: Thyroxine-binding globulin (418 aa).

The N-terminal stretch at 1-20 (MSVFFYLFVLVFGLQATIHC) is a signal peptide. Asparagine 24, asparagine 39, asparagine 102, asparagine 168, asparagine 227, and asparagine 256 each carry an N-linked (GlcNAc...) asparagine glycan. Positions 296 and 401 each coordinate thyroxine.

Belongs to the serpin family.

The protein resides in the secreted. Major thyroid hormone transport protein in serum. This Mus musculus (Mouse) protein is Thyroxine-binding globulin (Serpina7).